The primary structure comprises 447 residues: Drebrin-like protein A (447 aa).

In terms of domain architecture, ADF-H spans 2 to 133 (SVNLSKNGAA…EPESIMEKVA (132 aa)). 2 disordered regions span residues 141-160 (NFHKESKRGNEGPQGPVGSV) and 184-368 (KDEE…TENQ). A coiled-coil region spans residues 180–245 (AKAEKDEEER…EQEETEKQQT (66 aa)). Basic and acidic residues predominate over residues 184–242 (KDEEERRMEENRRANSEKDRLERERKEREQREAETREQRFRERAKEIDAQRKEQEETEK). Positions 246 to 255 (VPASQRSVNP) are enriched in polar residues. Over residues 319-328 (PESPVPPVSH) the composition is skewed to pro residues. A compositionally biased stretch (acidic residues) spans 345-365 (QEEENIYQDATEDQNIYEDTT). Residues 388–447 (EKGVCARALYDYQAADDTEISFDPDDLITQIQFIDEGWWRGFSPAGHFGMFPANYVELLE) form the SH3 domain.

Belongs to the ABP1 family.

The protein resides in the cytoplasm. The protein localises to the cytoskeleton. Its subcellular location is the cell projection. It localises to the lamellipodium. It is found in the ruffle. The protein resides in the cell cortex. The protein localises to the cytosol. Its subcellular location is the synapse. It localises to the perikaryon. It is found in the neuron projection. The protein resides in the cell membrane. The protein localises to the cytoplasmic vesicle. Its subcellular location is the clathrin-coated vesicle membrane. It localises to the golgi apparatus membrane. It is found in the podosome. The protein resides in the early endosome. The protein localises to the dendrite. Its subcellular location is the postsynaptic density. Adapter protein that binds F-actin and dynamin, and thereby plays a role in receptor-mediated endocytosis. Plays a role in the reorganization of the actin cytoskeleton, formation of cell projections, such as neurites, in neuron morphogenesis and synapse formation. Does not bind G-actin and promote actin polymerization by itself, but excerts its functions by interaction with other proteins. Required for the formation of organized podosome rosettes. In Xenopus laevis (African clawed frog), this protein is Drebrin-like protein A (dbnl-a).